The chain runs to 221 residues: Epididymal secretory glutathione peroxidase (221 aa).

The signal sequence occupies residues 1–21 (MTAWLGASYVLPILLVSFVQT). Residue cysteine 73 is part of the active site.

It belongs to the glutathione peroxidase family. Epididymis.

It is found in the secreted. It carries out the reaction 2 glutathione + H2O2 = glutathione disulfide + 2 H2O. Functionally, protects cells and enzymes from oxidative damage, by catalyzing the reduction of hydrogen peroxide, lipid peroxides and organic hydroperoxide, by glutathione. May constitute a glutathione peroxidase-like protective system against peroxide damage in sperm membrane lipids. This Canis lupus familiaris (Dog) protein is Epididymal secretory glutathione peroxidase (GPX5).